We begin with the raw amino-acid sequence, 211 residues long: Protein-L-isoaspartate O-methyltransferase (211 aa).

S62 is an active-site residue.

It belongs to the methyltransferase superfamily. L-isoaspartyl/D-aspartyl protein methyltransferase family.

It is found in the cytoplasm. It carries out the reaction [protein]-L-isoaspartate + S-adenosyl-L-methionine = [protein]-L-isoaspartate alpha-methyl ester + S-adenosyl-L-homocysteine. Its function is as follows. Catalyzes the methyl esterification of L-isoaspartyl residues in peptides and proteins that result from spontaneous decomposition of normal L-aspartyl and L-asparaginyl residues. It plays a role in the repair and/or degradation of damaged proteins. This Shewanella halifaxensis (strain HAW-EB4) protein is Protein-L-isoaspartate O-methyltransferase.